The primary structure comprises 1959 residues: Myosin-9 (1959 aa).

Residues 27–77 (AAKKLVWVPSEKSGFEAASLKEEVGDEAIVELAENGKKVKVNKDDIQKMNP) enclose the Myosin N-terminal SH3-like domain. In terms of domain architecture, Myosin motor spans 81–776 (SKVEDMAELT…VLAHLEEERD (696 aa)). 174–181 (GESGAGKT) contributes to the ATP binding site. The tract at residues 654 to 676 (LAKLMATLRNTNPNFVRCIIPNH) is actin-binding. Residues 779–808 (ITDVIIGFQACCRGYLARKAFAKRQQQLTA) enclose the IQ domain. A coiled-coil region spans residues 837–1925 (LLQVSRQEEE…LKSKLRRGDL (1089 aa)). 4 disordered regions span residues 1118-1168 (EDLE…REQE), 1694-1717 (RAKR…SGKG), 1879-1917 (LEEA…SSLK), and 1936-1959 (KGTG…KATE). Composition is skewed to basic and acidic residues over residues 1122-1148 (SERA…KTEL) and 1694-1704 (RAKRQAQQERD). The segment covering 1947–1959 (DGKAEAGDAKATE) has biased composition (basic and acidic residues).

The protein belongs to the TRAFAC class myosin-kinesin ATPase superfamily. Myosin family. In terms of assembly, myosin is a hexameric protein that consists of 2 heavy chain subunits (MHC), 2 alkali light chain subunits (MLC) and 2 regulatory light chain subunits (MLC-2). In terms of tissue distribution, expressed in fibroblasts, brain, lung, kidney, spleen, and skeletal, cardiac and smooth muscles.

It is found in the cytoplasm. It localises to the cytoskeleton. Its subcellular location is the cell cortex. The protein localises to the cytoplasmic vesicle. The protein resides in the secretory vesicle. It is found in the cortical granule. Its function is as follows. Cellular myosin that appears to play a role in cytokinesis, cell shape, and specialized functions such as secretion and capping. This chain is Myosin-9 (MYH9), found in Gallus gallus (Chicken).